The following is a 741-amino-acid chain: Fibrinogen alpha chain (741 aa).

The signal sequence occupies residues 1–18 (MIPVTILCVLLCLNLAWA). Pyrrolidone carboxylic acid is present on Gln-19. Residues 67-506 (CCRMQGIIDD…STRRSYNGKD (440 aa)) are a coiled coil. Residues 270–307 (VAEARGDSSPSHTGKLITSSHRRESPSLVDKTSSASSV) form a disordered region. The span at 277-288 (SSPSHTGKLITS) shows a compositional bias: polar residues. Cys-310 and Cys-341 are disulfide-bonded. Composition is skewed to low complexity over residues 381-398 (STSS…HVTG) and 435-449 (SASH…SSSS). Positions 381–510 (STSSRHSIGS…SYNGKDCDDI (130 aa)) are disordered. Polar residues predominate over residues 450–459 (FNKGGSTFET). A Fibrinogen C-terminal domain is found at 498–739 (TRRSYNGKDC…VVRMKIRPLE (242 aa)). 4 residues coordinate Ca(2+): Asp-666, Asp-668, Trp-670, and Glu-672. Cys-674 and Cys-687 form a disulfide bridge.

In terms of assembly, heterohexamer; disulfide linked. Contains 2 sets of 3 non-identical chains (alpha, beta and gamma). The 2 heterotrimers are in head to head conformation with the N-termini in a small central domain. Conversion of fibrinogen to fibrin is triggered by thrombin, which cleaves fibrinopeptides A and B from alpha and beta chains, and thus exposes the N-terminal polymerization sites responsible for the formation of the soft clot. The soft clot is converted into the hard clot by factor XIIIA which catalyzes the epsilon-(gamma-glutamyl)lysine cross-linking between gamma chains (stronger) and between alpha chains (weaker) of different monomers. Post-translationally, forms F13A-mediated cross-links between a glutamine and the epsilon-amino group of a lysine residue, forming fibronectin-fibrinogen heteropolymers.

The protein resides in the secreted. Functionally, cleaved by the protease thrombin to yield monomers which, together with fibrinogen beta (FGB) and fibrinogen gamma (FGG), polymerize to form an insoluble fibrin matrix. Fibrin has a major function in hemostasis as one of the primary components of blood clots. The chain is Fibrinogen alpha chain (FGA) from Gallus gallus (Chicken).